The primary structure comprises 264 residues: Thymidylate synthase (264 aa).

DUMP is bound by residues Arg-21 and 126–127 (RR). Residue Cys-146 is the Nucleophile of the active site. Residues 166–169 (RSAD), Asn-177, and 207–209 (HLY) contribute to the dUMP site. Asp-169 contributes to the (6R)-5,10-methylene-5,6,7,8-tetrahydrofolate binding site. Ala-263 lines the (6R)-5,10-methylene-5,6,7,8-tetrahydrofolate pocket.

This sequence belongs to the thymidylate synthase family. Bacterial-type ThyA subfamily. Homodimer.

It localises to the cytoplasm. The enzyme catalyses dUMP + (6R)-5,10-methylene-5,6,7,8-tetrahydrofolate = 7,8-dihydrofolate + dTMP. It participates in pyrimidine metabolism; dTTP biosynthesis. Its function is as follows. Catalyzes the reductive methylation of 2'-deoxyuridine-5'-monophosphate (dUMP) to 2'-deoxythymidine-5'-monophosphate (dTMP) while utilizing 5,10-methylenetetrahydrofolate (mTHF) as the methyl donor and reductant in the reaction, yielding dihydrofolate (DHF) as a by-product. This enzymatic reaction provides an intracellular de novo source of dTMP, an essential precursor for DNA biosynthesis. The chain is Thymidylate synthase from Bradyrhizobium sp. (strain BTAi1 / ATCC BAA-1182).